The primary structure comprises 239 residues: Putative CCR4-associated factor 1 homolog 8 (239 aa).

Positions 17, 19, 133, and 204 each coordinate a divalent metal cation.

It belongs to the CAF1 family. In terms of assembly, component of the CCR4-NOT complex, at least composed of CRR4 and CAF1 proteins. A divalent metal cation serves as cofactor.

It localises to the nucleus. The protein localises to the cytoplasm. The enzyme catalyses Exonucleolytic cleavage of poly(A) to 5'-AMP.. Ubiquitous transcription factor required for a diverse set of processes. It is a component of the CCR4 complex involved in the control of gene expression. This Arabidopsis thaliana (Mouse-ear cress) protein is Putative CCR4-associated factor 1 homolog 8 (CAF1-8).